The chain runs to 233 residues: Type II methyltransferase M.MunI (233 aa).

It belongs to the MT-A70-like family.

The enzyme catalyses a 2'-deoxyadenosine in DNA + S-adenosyl-L-methionine = an N(6)-methyl-2'-deoxyadenosine in DNA + S-adenosyl-L-homocysteine + H(+). A methylase that recognizes the double-stranded sequence 5'-CAATTG-3', methylates A-3 on both strands, and protects the DNA from cleavage by the MunI endonuclease. This Mycoplasma sp protein is Type II methyltransferase M.MunI.